We begin with the raw amino-acid sequence, 72 residues long: SRY-related protein MG42 (72 aa).

A DNA-binding region (HMG box) is located at residues 1-69 (VKRPMNAFMV…KHMADYPNYK (69 aa)).

The protein localises to the nucleus. The chain is SRY-related protein MG42 from Tarentola mauritanica (Common wall gecko).